The following is a 762-amino-acid chain: 5-methyltetrahydropteroyltriglutamate--homocysteine methyltransferase (762 aa).

5-methyltetrahydropteroyltri-L-glutamate-binding positions include 18–21 (REWK) and K112. L-homocysteine contacts are provided by residues 435 to 437 (IGS) and E488. L-methionine is bound by residues 435–437 (IGS) and E488. 5-methyltetrahydropteroyltri-L-glutamate-binding positions include 519–520 (RC) and W565. Position 603 (D603) interacts with L-homocysteine. D603 contributes to the L-methionine binding site. Position 609 (E609) interacts with 5-methyltetrahydropteroyltri-L-glutamate. 3 residues coordinate Zn(2+): H645, C647, and E669. H698 functions as the Proton donor in the catalytic mechanism. C719 is subject to S-bacillithiol cysteine disulfide. Position 730 (C730) interacts with Zn(2+).

It belongs to the vitamin-B12 independent methionine synthase family. Zn(2+) is required as a cofactor. Post-translationally, in response to oxidative stress, Cys-719 can react with bacillithiol (BSH) to form mixed disulfides. S-bacillithiolation leads to loss of catalytic activity and methionine auxotrophy.

The enzyme catalyses 5-methyltetrahydropteroyltri-L-glutamate + L-homocysteine = tetrahydropteroyltri-L-glutamate + L-methionine. The protein operates within amino-acid biosynthesis; L-methionine biosynthesis via de novo pathway; L-methionine from L-homocysteine (MetE route): step 1/1. Catalyzes the transfer of a methyl group from 5-methyltetrahydrofolate to homocysteine resulting in methionine formation. In Bacillus subtilis (strain 168), this protein is 5-methyltetrahydropteroyltriglutamate--homocysteine methyltransferase.